A 247-amino-acid polypeptide reads, in one-letter code: UDP-2,3-diacylglucosamine hydrolase (247 aa).

Positions 8, 10, 41, 79, and 114 each coordinate Mn(2+). 79 to 80 (NR) is a binding site for substrate. The substrate site is built by Asp-122, Ser-160, Asp-171, Arg-174, and His-202. Residues His-202 and His-204 each coordinate Mn(2+).

The protein belongs to the LpxH family. Requires Mn(2+) as cofactor.

It is found in the cell inner membrane. It carries out the reaction UDP-2-N,3-O-bis[(3R)-3-hydroxytetradecanoyl]-alpha-D-glucosamine + H2O = 2-N,3-O-bis[(3R)-3-hydroxytetradecanoyl]-alpha-D-glucosaminyl 1-phosphate + UMP + 2 H(+). The protein operates within glycolipid biosynthesis; lipid IV(A) biosynthesis; lipid IV(A) from (3R)-3-hydroxytetradecanoyl-[acyl-carrier-protein] and UDP-N-acetyl-alpha-D-glucosamine: step 4/6. Its function is as follows. Hydrolyzes the pyrophosphate bond of UDP-2,3-diacylglucosamine to yield 2,3-diacylglucosamine 1-phosphate (lipid X) and UMP by catalyzing the attack of water at the alpha-P atom. Involved in the biosynthesis of lipid A, a phosphorylated glycolipid that anchors the lipopolysaccharide to the outer membrane of the cell. The polypeptide is UDP-2,3-diacylglucosamine hydrolase (Xanthomonas axonopodis pv. citri (strain 306)).